A 236-amino-acid polypeptide reads, in one-letter code: Terpene cyclase andB (236 aa).

7 helical membrane-spanning segments follow: residues threonine 13–methionine 33, methionine 45–proline 65, valine 70–isoleucine 90, histidine 106–isoleucine 126, phenylalanine 135–leucine 155, valine 166–tryptophan 186, and leucine 200–tyrosine 220.

The protein belongs to the paxB family.

Its subcellular location is the membrane. It participates in secondary metabolite biosynthesis; terpenoid biosynthesis. In terms of biological role, terpene cyclase; part of the gene cluster that mediates the biosynthesis of anditomin, a fungal meroterpenoid. The first step of the pathway is the synthesis of 3,5-dimethylorsellinic acid (DMOA) by the polyketide synthase andM. DMOA is then converted to the phthalide compound 5,7-dihydroxy-4,6-dimethylphthalide (DHDMP) by the cytochrome P450 monooxygenase andK, which is further prenylated by the prenyltransferase andD to yield farnesyl-DHDMP. Further epoxidation by the FAD-dependent monooxygenase andE leads to epoxyfarnesyl-DHDMP. The next step involves the terpene cyclase andB that converts epoxyfarnesyl-DHDMP into preandiloid A through opening of the epoxide ring followed by the cyclization of the farnesyl moiety. Preandiloid A is in turn oxidized at the C-3 hydroxyl group to yield preandiloid B by the dehydrogenase andC. The dioxygenase andA is solely responsible for the dehydrogenation of preandiloid B leading to the enone preandiloid C, as well as for the intriguing structural rearrangement to generate the bicyclo[2.2.2]octane core, transforming preandiloid C into andiconin. FAD-binding monooxygenase andJ then produces andilesin D which is reduced by dehydrogenase andI to yield andilesin A. Action of acetyltransferase andG followed by a spontaneous acetate elimination leads then to andilesin B, which is in turn substrate of the short chain dehydrogenase andH to yield andilesin C. Finally, the dioxygenase andF catalyzes the transformation of andilesin C to anditomin. This is Terpene cyclase andB from Emericella variicolor (Aspergillus stellatus).